Here is a 66-residue protein sequence, read N- to C-terminus: U1-theraphotoxin-Cg1a 2 (66 aa).

The signal sequence occupies residues 1-21; it reads MKTSALFVIFGLVLLFCNSFA. Residues 22–29 constitute a propeptide that is removed on maturation; it reads AELEMTGR. 3 cysteine pairs are disulfide-bonded: C31–C46, C38–C51, and C45–C58. P63 is subject to Proline amide.

This sequence belongs to the neurotoxin 10 (Hwtx-1) family. 46 (Jztx-7/10/12) subfamily. Expressed by the venom gland.

The protein localises to the secreted. Its function is as follows. Probable ion channel inhibitor. The sequence is that of U1-theraphotoxin-Cg1a 2 from Chilobrachys guangxiensis (Chinese earth tiger tarantula).